The following is a 204-amino-acid chain: uncharacterized protein (204 aa).

4 consecutive transmembrane segments (helical) span residues 21–50 (AWIVFFTIPLVITPLPYVGFLAFFFILLFF), 92–114 (FFTALLYYLFTKFYAVLFFWWWF), 150–172 (LGLRWSFIGLVLLTIAVLLVLSI), and 176–198 (LLASFVVLLLSVVLAHFTAETIL).

It localises to the cell membrane. This is an uncharacterized protein from Aquifex aeolicus (strain VF5).